The primary structure comprises 234 residues: 7-cyano-7-deazaguanine synthase (234 aa).

Residue 8–18 participates in ATP binding; that stretch reads FSGGQDSTTCA. Zn(2+) is bound by residues cysteine 194, cysteine 202, cysteine 205, and cysteine 208.

It belongs to the QueC family. The cofactor is Zn(2+).

It carries out the reaction 7-carboxy-7-deazaguanine + NH4(+) + ATP = 7-cyano-7-deazaguanine + ADP + phosphate + H2O + H(+). Its pathway is purine metabolism; 7-cyano-7-deazaguanine biosynthesis. Functionally, catalyzes the ATP-dependent conversion of 7-carboxy-7-deazaguanine (CDG) to 7-cyano-7-deazaguanine (preQ(0)). The sequence is that of 7-cyano-7-deazaguanine synthase from Gloeobacter violaceus (strain ATCC 29082 / PCC 7421).